The chain runs to 72 residues: uncharacterized protein (72 aa).

The protein belongs to the asfivirus I73R family.

The protein resides in the virion. This is an uncharacterized protein from African swine fever virus (isolate Warthog/Namibia/Wart80/1980) (ASFV).